A 136-amino-acid chain; its full sequence is Small ribosomal subunit protein uS9 (136 aa).

The interval 95-136 is disordered; it reads GLSPDNRKPLKTEGHLSRDPRSKERKKYGLKKARKAGQFSKR. Basic and acidic residues predominate over residues 99–116; sequence DNRKPLKTEGHLSRDPRS. Residues 117-136 are compositionally biased toward basic residues; it reads KERKKYGLKKARKAGQFSKR.

The protein belongs to the universal ribosomal protein uS9 family.

The polypeptide is Small ribosomal subunit protein uS9 (Prochlorococcus marinus subsp. pastoris (strain CCMP1986 / NIES-2087 / MED4)).